The following is a 256-amino-acid chain: 1-(5-phosphoribosyl)-5-[(5-phosphoribosylamino)methylideneamino] imidazole-4-carboxamide isomerase (256 aa).

The active-site Proton acceptor is the D8. Residue D129 is the Proton donor of the active site.

This sequence belongs to the HisA/HisF family.

Its subcellular location is the cytoplasm. The catalysed reaction is 1-(5-phospho-beta-D-ribosyl)-5-[(5-phospho-beta-D-ribosylamino)methylideneamino]imidazole-4-carboxamide = 5-[(5-phospho-1-deoxy-D-ribulos-1-ylimino)methylamino]-1-(5-phospho-beta-D-ribosyl)imidazole-4-carboxamide. The protein operates within amino-acid biosynthesis; L-histidine biosynthesis; L-histidine from 5-phospho-alpha-D-ribose 1-diphosphate: step 4/9. The protein is 1-(5-phosphoribosyl)-5-[(5-phosphoribosylamino)methylideneamino] imidazole-4-carboxamide isomerase of Syntrophobacter fumaroxidans (strain DSM 10017 / MPOB).